The sequence spans 143 residues: Ribosomal RNA large subunit methyltransferase H (143 aa).

S-adenosyl-L-methionine contacts are provided by Leu-68 and Gly-95.

The protein belongs to the RNA methyltransferase RlmH family. Homodimer.

The protein resides in the cytoplasm. It carries out the reaction pseudouridine(1915) in 23S rRNA + S-adenosyl-L-methionine = N(3)-methylpseudouridine(1915) in 23S rRNA + S-adenosyl-L-homocysteine + H(+). Specifically methylates the pseudouridine at position 1915 (m3Psi1915) in 23S rRNA. The chain is Ribosomal RNA large subunit methyltransferase H from Mycoplasma mobile (strain ATCC 43663 / 163K / NCTC 11711) (Mesomycoplasma mobile).